We begin with the raw amino-acid sequence, 62 residues long: MFAVEMKFEVPVCTSCGKEITPREHATHFVCPNCGEAIIWRCESCRVLSVPYKCPKCGWEGP.

Residues C13, C16, C31, C34, C42, C45, C54, and C57 each coordinate Zn(2+).

Crystallized in association with 70S ribosomes. The cofactor is Zn(2+).

The chain is Double zinc ribbon protein TK0111 from Thermococcus kodakarensis (strain ATCC BAA-918 / JCM 12380 / KOD1) (Pyrococcus kodakaraensis (strain KOD1)).